The chain runs to 114 residues: Putative pterin-4-alpha-carbinolamine dehydratase (114 aa).

Belongs to the pterin-4-alpha-carbinolamine dehydratase family.

The catalysed reaction is (4aS,6R)-4a-hydroxy-L-erythro-5,6,7,8-tetrahydrobiopterin = (6R)-L-erythro-6,7-dihydrobiopterin + H2O. The polypeptide is Putative pterin-4-alpha-carbinolamine dehydratase (Chlorobium luteolum (strain DSM 273 / BCRC 81028 / 2530) (Pelodictyon luteolum)).